The following is a 390-amino-acid chain: Glucose-fructose oxidoreductase domain-containing protein 1 (390 aa).

The first 21 residues, 1 to 21 (MLPGVGVFGTSLTSRVIIPLL), serve as a signal peptide directing secretion. Residues Asn-161, Asn-270, and Asn-354 are each glycosylated (N-linked (GlcNAc...) asparagine).

This sequence belongs to the Gfo/Idh/MocA family. In terms of assembly, homodimer.

The protein resides in the secreted. In terms of biological role, probably catalytically inactive enzyme. Does not bind NAD or NADP. The chain is Glucose-fructose oxidoreductase domain-containing protein 1 (gfod1) from Xenopus tropicalis (Western clawed frog).